The chain runs to 321 residues: MIFSTLEHILTHISFSIISVVITIQLMNLLVHELVQLGDASEKGMIATFFSITGLLVTRWIYSGHFPLSDLYESLIFLSWSFSIIHMVPYFRNHRNHFSAITAPSAIFTQGFATSGLLTEMHQSIILVPALQSQWLMMHVSMMLLSYAALLCGSLLSVALLVITFRKNSDIFDKRNNFLIRSFFFGEIEYLNEKRSVLQNTSFDSFTNYHKYQLTQRLDFWSYRVISLGFIFLTIGILSGAVWANEAWGSYWNWDPKEIWAFITWAIFAIYLHTRTNHSLQGANSAIVASIGFLIIWICYFGVNLLGIGLHSYGSFTLISN.

A run of 8 helical transmembrane segments spans residues 9-29 (ILTH…LMNL), 44-64 (GMIA…IYSG), 71-91 (LYES…VPYF), 98-118 (FSAI…SGLL), 143-163 (MLLS…LLVI), 225-245 (VISL…VWAN), 252-272 (WNWD…AIYL), and 286-306 (AIVA…VNLL).

This sequence belongs to the CcmF/CycK/Ccl1/NrfE/CcsA family. As to quaternary structure, may interact with Ccs1.

The protein resides in the plastid. It is found in the chloroplast thylakoid membrane. Its function is as follows. Required during biogenesis of c-type cytochromes (cytochrome c6 and cytochrome f) at the step of heme attachment. The protein is Cytochrome c biogenesis protein CcsA of Acorus calamus var. americanus (American sweet flag).